Consider the following 376-residue polypeptide: MRLSVRKVLLAAGCALALVLAVQLGQQVLECRAVLGGTRNPRRMRPEQEELVMLGADHVEYRYGKAMPLIFVGGVPRSGTTLMRAMLDAHPEVRCGEETRIIPRVLAMRQAWTKSGREKLRLDEAGVTDEVLDAAMQAFILEVIAKHGEPARVLCNKDPFTLKSSVYLARLFPNSKFLLMVRDGRASVHSMITRKVTIAGFDLSSYRDCLTKWNKAIEVMYAQCMEVGRDKCLPVYYEQLVLHPRRSLKRILDFLGIAWSDTVLHHEDLIGKPGGVSLSKIERSTDQVIKPVNLEALSKWTGHIPRDVVRDMAQIAPMLARLGYDPYANPPNYGNPDPIVINNTHRVLKGDYKTPANLKGYFQVNQNSTSPHLGSS.

Over 1–8 (MRLSVRKV) the chain is Cytoplasmic. Residues 9–25 (LLAAGCALALVLAVQLG) form a helical; Signal-anchor for type II membrane protein membrane-spanning segment. Over 26–376 (QQVLECRAVL…NSTSPHLGSS (351 aa)) the chain is Lumenal. Residue 77 to 81 (RSGTT) coordinates 3'-phosphoadenylyl sulfate. Cysteine 95 and cysteine 155 are disulfide-bonded. Residue glutamate 98 is the Proton donor/acceptor of the active site. An interaction with peptide substrate region spans residues 100 to 104 (RIIPR). Residues arginine 182, serine 190, and arginine 194 each contribute to the 3'-phosphoadenylyl sulfate site. A disulfide bond links cysteine 224 and cysteine 232. Residues tyrosine 237, 284-293 (STDQVIKPVN), and lysine 299 each bind 3'-phosphoadenylyl sulfate. N-linked (GlcNAc...) asparagine glycans are attached at residues asparagine 342 and asparagine 367.

The protein belongs to the protein sulfotransferase family. As to quaternary structure, homodimer. Can also form heterodimers with TPST1. N-glycosylated. Widely expressed.

It localises to the golgi apparatus membrane. The catalysed reaction is L-tyrosyl-[protein] + 3'-phosphoadenylyl sulfate = O-sulfo-L-tyrosine-[protein] + adenosine 3',5'-bisphosphate + H(+). Functionally, catalyzes the O-sulfation of tyrosine residues within acidic motifs of polypeptides, using 3'-phosphoadenylyl sulfate (PAPS) as cosubstrate. The polypeptide is Protein-tyrosine sulfotransferase 2 (Tpst2) (Mus musculus (Mouse)).